The following is a 174-amino-acid chain: Extracellular cysteine protease (174 aa).

Active-site residues include cysteine 24, histidine 120, and asparagine 141.

This sequence belongs to the peptidase C47 family. In terms of processing, proteolytically cleaved.

The protein localises to the secreted. It localises to the cell wall. With respect to regulation, inhibited by heavy metal ions such as Zn(2+) or Ni(2+), iodoacetamide, N-ethylmaleimide, leupeptin, SDS and E-64. Also inhibited by chloromethylketones TPCK and TLCK and by human plasma inhibitor alpha-2-macroglobulin. Stimulated by L-cysteine. Functionally, cysteine protease able to cleave elastin, insulin, myoglobin, fibronectin, fibrinogen, HMW-kininogen, alpha-1-protease inhibitor and alpha-1-antitrypsin. Along with other extracellular proteases may contribute to the colonization and infection of human tissues. The polypeptide is Extracellular cysteine protease (ecpA) (Staphylococcus epidermidis).